Reading from the N-terminus, the 184-residue chain is Ras-related protein Rap-1b (184 aa).

10 to 18 (GSGGVGKSA) provides a ligand contact to GTP. The tract at residues 25–67 (QGIFVEKYDPTIEDSYRKQVEVDAQQCMLEILDTAGTEQFTAM) is interaction with KRIT1. An Effector region motif is present at residues 32–40 (YDPTIEDSY). GTP contacts are provided by residues 57–61 (DTAGT), 116–119 (NKCD), and 147–149 (SAK). Ser179 is subject to Phosphoserine; by PKA. Cys181 is subject to Cysteine methyl ester. A lipid anchor (S-geranylgeranyl cysteine) is attached at Cys181. A propeptide spans 182–184 (QLL) (removed in mature form).

As to quaternary structure, heterodimer with RAP1GAP. Interacts with EPAC2. Interacts with SGSM1. Interacts with SGSM2. Interacts with SGSM3. Interacts with KRIT1. Interacts with RAP1GDS1.

It localises to the cell membrane. The protein localises to the cytoplasm. It is found in the cytosol. The protein resides in the cell junction. It carries out the reaction GTP + H2O = GDP + phosphate + H(+). Its activity is regulated as follows. Activated by guanine nucleotide-exchange factor (GEF) EPAC2 in a cAMP-dependent manner. Functionally, GTP-binding protein that possesses intrinsic GTPase activity. Contributes to the polarizing activity of KRIT1 and CDH5 in the establishment and maintenance of correct endothelial cell polarity and vascular lumen. Required for the localization of phosphorylated PRKCZ, PARD3 and TIAM1 to the cell junction. Plays a role in the establishment of basal endothelial barrier function. This chain is Ras-related protein Rap-1b (RAP1B), found in Bos taurus (Bovine).